Reading from the N-terminus, the 436-residue chain is Ribosomal protein uS12 methylthiotransferase RimO (436 aa).

Positions 2 to 117 (RNVGIISLGC…IVDVIEEVKK (116 aa)) constitute an MTTase N-terminal domain. The [4Fe-4S] cluster site is built by C11, C47, C80, C154, C158, and C161. The Radical SAM core domain maps to 140 to 369 (TTPPYYAYLK…MEIQKQISYE (230 aa)). The 65-residue stretch at 372 to 436 (MSKIGTKLEV…AFEYDLVGEY (65 aa)) folds into the TRAM domain.

This sequence belongs to the methylthiotransferase family. RimO subfamily. [4Fe-4S] cluster serves as cofactor.

Its subcellular location is the cytoplasm. It carries out the reaction L-aspartate(89)-[ribosomal protein uS12]-hydrogen + (sulfur carrier)-SH + AH2 + 2 S-adenosyl-L-methionine = 3-methylsulfanyl-L-aspartate(89)-[ribosomal protein uS12]-hydrogen + (sulfur carrier)-H + 5'-deoxyadenosine + L-methionine + A + S-adenosyl-L-homocysteine + 2 H(+). Functionally, catalyzes the methylthiolation of an aspartic acid residue of ribosomal protein uS12. The polypeptide is Ribosomal protein uS12 methylthiotransferase RimO (Caldanaerobacter subterraneus subsp. tengcongensis (strain DSM 15242 / JCM 11007 / NBRC 100824 / MB4) (Thermoanaerobacter tengcongensis)).